A 494-amino-acid chain; its full sequence is MFFQNIMIYLFSLLLIPLIVYFLLIYIRLRYSNNSNNQIKTIGLTTLIINLILSMIIFILFDFSSKQFQLQLEEIYKISYFDLYLGIDGISIYFLLLTTMIMPISLVANWNSIDSKNVLSFVIIILLLETLLLAVFLVLDILLFYIFFESILPPLFLLIGLFGSSDKVRASFYLFLYTLLGSLFMLLSIITMSSIMGATAFDALSKANFSYITQLFLFYGIFISFAVKTPTIFLNTWLLKAHVESPLAGSVILAGIVWKLRWYGIFRLIIPLLPKASMDYTYIVYVIGVITIFYTSFSTLRTIAIKELIAYSSVSHAAVYLLSAFSNTIQGIEGAIALGLAHGFVSSGLFICVGGILYDRSSTRLITYYRGMAQLMPIFCILFLYITLGNCGSPLTLNFIGEFMSLYGIFERISVLGVLASTSIVFSAAYTIFMFNRIAFGGQFSSYFFNYVKDLSKREFILLISLVVPAVFFGIYPAVILDGLHYSVSGLIYN.

14 helical membrane passes run 6 to 26 (IMIY…LLIY), 41 to 61 (TIGL…FILF), 87 to 107 (IDGI…ISLV), 118 to 138 (VLSF…VFLV), 141 to 161 (ILLF…LIGL), 172 to 192 (FYLF…IITM), 207 to 227 (ANFS…SFAV), 246 to 266 (PLAG…YGIF), 280 to 300 (YTYI…FSTL), 302 to 322 (TIAI…VYLL), 336 to 356 (IALG…VGGI), 375 to 395 (LMPI…GSPL), 415 to 435 (VLGV…IFMF), and 460 to 480 (FILL…PAVI).

It belongs to the complex I subunit 4 family.

Its subcellular location is the mitochondrion membrane. The catalysed reaction is a ubiquinone + NADH + 5 H(+)(in) = a ubiquinol + NAD(+) + 4 H(+)(out). In terms of biological role, core subunit of the mitochondrial membrane respiratory chain NADH dehydrogenase (Complex I) that is believed to belong to the minimal assembly required for catalysis. Complex I functions in the transfer of electrons from NADH to the respiratory chain. The immediate electron acceptor for the enzyme is believed to be ubiquinone. This Trichophyton rubrum (Athlete's foot fungus) protein is NADH-ubiquinone oxidoreductase chain 4 (ND4).